The chain runs to 353 residues: MDRCTSSFLLLTLVSTLSILQISFAQLVPAIMTFGDSVVDVGNNNYLPTLFRADYPPYGRDFANHKATGRFCNGKLATDITAETLGFTKYPPAYLSPEASGKNLLIGANFASAASGYDDKAALLNHAIPLYQQVEYFKEYKSKLIKIAGSKKADSIIKGAICLLSAGSSDFVQNYYVNPLLYKVYTVDAYGSFLIDNFSTFIKQVYAVGARKIGVTSLPPTGCLPAARTLFGFHEKGCVSRLNTDAQNFNKKLNAAASKLQKQYSDLKIVVFDIYSPLYDLVQNPSKSGFTEATKGCCGTGTVETTSLLCNPKSFGTCSNATQYVFWDSVHPSEAANEILATALIGQGFSLLG.

A signal peptide spans 1–25; that stretch reads MDRCTSSFLLLTLVSTLSILQISFA. Catalysis depends on Ser-37, which acts as the Nucleophile. N-linked (GlcNAc...) asparagine glycosylation is found at Asn-197 and Asn-320. Residues Asp-328 and His-331 contribute to the active site.

It belongs to the 'GDSL' lipolytic enzyme family.

The protein resides in the secreted. The chain is GDSL esterase/lipase APG (APG) from Arabidopsis thaliana (Mouse-ear cress).